The primary structure comprises 330 residues: Inorganic pyrophosphatase 2, mitochondrial (330 aa).

Residues 1 to 27 (MRALLPLLSVGRGWRVGAAARPPRRVM) constitute a mitochondrion transit peptide. Residues Asp159, Asp164, and Asp196 each coordinate Mg(2+). Residue Lys211 is modified to N6-succinyllysine. An N6-acetyllysine modification is found at Lys219. Lys254 is modified (N6-succinyllysine). An N6-acetyllysine modification is found at Lys256.

This sequence belongs to the PPase family. In terms of assembly, homodimer. Mg(2+) serves as cofactor.

It localises to the mitochondrion. The enzyme catalyses diphosphate + H2O = 2 phosphate + H(+). Hydrolyzes inorganic pyrophosphate. This activity is essential for correct regulation of mitochondrial membrane potential, and mitochondrial organization and function. This is Inorganic pyrophosphatase 2, mitochondrial (Ppa2) from Mus musculus (Mouse).